Reading from the N-terminus, the 250-residue chain is Phosphatidylglycerol--prolipoprotein diacylglyceryl transferase (250 aa).

4 consecutive transmembrane segments (helical) span residues 11-31 (LAIR…LLLA), 49-69 (FLIA…IFEF), 84-104 (QGGL…YIYL), and 109-129 (ESFF…QAIG). Arg130 is a binding site for a 1,2-diacyl-sn-glycero-3-phospho-(1'-sn-glycerol). The next 3 membrane-spanning stretches (helical) occupy residues 169–189 (PTFL…VYLL), 196–216 (GIVF…IEGL), and 228–248 (VAQL…YNII).

It belongs to the Lgt family.

It is found in the cell membrane. It catalyses the reaction L-cysteinyl-[prolipoprotein] + a 1,2-diacyl-sn-glycero-3-phospho-(1'-sn-glycerol) = an S-1,2-diacyl-sn-glyceryl-L-cysteinyl-[prolipoprotein] + sn-glycerol 1-phosphate + H(+). It functions in the pathway protein modification; lipoprotein biosynthesis (diacylglyceryl transfer). Functionally, catalyzes the transfer of the diacylglyceryl group from phosphatidylglycerol to the sulfhydryl group of the N-terminal cysteine of a prolipoprotein, the first step in the formation of mature lipoproteins. In Clostridium botulinum (strain 657 / Type Ba4), this protein is Phosphatidylglycerol--prolipoprotein diacylglyceryl transferase.